Here is a 747-residue protein sequence, read N- to C-terminus: Pyrin (747 aa).

The Pyrin domain occupies 1–92; it reads MANTRVDHLL…AEELHKATGP (92 aa). The disordered stretch occupies residues 89-181; the sequence is ATGPEHLTEE…GARSAAPLYR (93 aa). Positions 122–135 are enriched in acidic residues; that stretch reads PGEDEAQQNDDESD. Zn(2+) contacts are provided by Cys442, His445, Cys465, and His471. The B box-type zinc-finger motif lies at 442 to 479; it reads CPRHMKQVQLLFCEDHREPICLICRLSQEHQGHRVRPI. The stretch at 479 to 508 forms a coiled coil; that stretch reads IEEAALQYKEQIRKQLERLREMRGYVEEHK. A required for homotrimerization and induction of pyroptosomes region spans residues 487–645; it reads KEQIRKQLER…RFSEMLGSEM (159 aa). The interval 698–720 is disordered; that stretch reads EPQDYLHPSSAQDTPELHEIHSQ.

In terms of assembly, homotrimer. Interacts (via the B box-type zinc finger) with PSTPIP1. Interacts (via the B30.2/SPRY domain) with several components of the inflammasome complex, including CASP1 p20 and p10 subunits, CASP5, PYCARD, NLRP1, NLRP2 and NLRP3, as well as with unprocessed IL1B; this interaction may lead to autophagic degradation of these proteins. Component of the AIM2 PANoptosome complex, a multiprotein complex that drives inflammatory cell death (PANoptosis). Interacts with NFKBIA and RELA. Interacts weakly with VASP and ACTR3. Interacts with active ULK1 (phosphorylated on 'Ser-317') and BECN1 simultaneously. Also interacts with ATG16L1 (via WD repeats), and with ATG8 family members, including GABARAP, GABARAPL1 and, to a lesser extent, GABARAPL2, MAP1LC3A/LC3A and MAP1LC3C/LC3C. Interacts with TRIM21. Interacts with YWHAB, YWHAE, YWHAG, YWHAH, YWHAQ and YWHAZ; the interaction is required for the down-regulation of pyrin pro-inflammatory activity. In terms of processing, degraded along with the delivery of its substrates to autolysosomal compartments (at protein level). Expressed in spleen and, to a lesser degree in the lung. Not expressed in thymus, testis, ovary, heart, brain, liver, kidney and muscle.

It localises to the cytoplasm. Its subcellular location is the cytoskeleton. The protein resides in the cell projection. The protein localises to the ruffle. It is found in the lamellipodium. It localises to the cytoplasmic vesicle. Its subcellular location is the autophagosome. The protein resides in the nucleus. Involved in the regulation of innate immunity and the inflammatory response in response to IFNG/IFN-gamma. Organizes autophagic machinery by serving as a platform for the assembly of ULK1, Beclin 1/BECN1, ATG16L1, and ATG8 family members and recognizes specific autophagy targets, thus coordinating target recognition with assembly of the autophagic apparatus and initiation of autophagy. Acts as an autophagy receptor for the degradation of several inflammasome components, including CASP1, NLRP1 and NLRP3, hence preventing excessive IL1B- and IL18-mediated inflammation. However, it can also have a positive effect in the inflammatory pathway, acting as an innate immune sensor that triggers PYCARD/ASC specks formation, caspase-1 activation, and IL1B and IL18 production. Together with AIM2, also acts as a mediator of pyroptosis, necroptosis and apoptosis (PANoptosis), an integral part of host defense against pathogens, in response to bacterial infection. It is required for PSTPIP1-induced PYCARD/ASC oligomerization and inflammasome formation. Recruits PSTPIP1 to inflammasomes, and is required for PSTPIP1 oligomerization. This Rattus norvegicus (Rat) protein is Pyrin.